The sequence spans 542 residues: CTP synthase (542 aa).

The interval Met-1–Ile-265 is amidoligase domain. Ser-13 serves as a coordination point for CTP. Ser-13 serves as a coordination point for UTP. ATP contacts are provided by residues Ser-14–Ile-19 and Asp-71. Residues Asp-71 and Glu-139 each coordinate Mg(2+). CTP is bound by residues Asp-146–Glu-148, Lys-186–Gln-191, and Lys-222. UTP contacts are provided by residues Lys-186–Gln-191 and Lys-222. In terms of domain architecture, Glutamine amidotransferase type-1 spans Thr-291–Leu-541. Residue Gly-353 participates in L-glutamine binding. The active-site Nucleophile; for glutamine hydrolysis is the Cys-380. Residues Phe-381 to Gln-384, Glu-404, and Arg-469 contribute to the L-glutamine site. Catalysis depends on residues His-514 and Glu-516.

Belongs to the CTP synthase family. Homotetramer.

It catalyses the reaction UTP + L-glutamine + ATP + H2O = CTP + L-glutamate + ADP + phosphate + 2 H(+). The enzyme catalyses L-glutamine + H2O = L-glutamate + NH4(+). The catalysed reaction is UTP + NH4(+) + ATP = CTP + ADP + phosphate + 2 H(+). It participates in pyrimidine metabolism; CTP biosynthesis via de novo pathway; CTP from UDP: step 2/2. Its activity is regulated as follows. Allosterically activated by GTP, when glutamine is the substrate; GTP has no effect on the reaction when ammonia is the substrate. The allosteric effector GTP functions by stabilizing the protein conformation that binds the tetrahedral intermediate(s) formed during glutamine hydrolysis. Inhibited by the product CTP, via allosteric rather than competitive inhibition. In terms of biological role, catalyzes the ATP-dependent amination of UTP to CTP with either L-glutamine or ammonia as the source of nitrogen. Regulates intracellular CTP levels through interactions with the four ribonucleotide triphosphates. The polypeptide is CTP synthase (Agrobacterium fabrum (strain C58 / ATCC 33970) (Agrobacterium tumefaciens (strain C58))).